The following is a 205-amino-acid chain: GTP cyclohydrolase-2 (205 aa).

A GTP-binding site is contributed by 49 to 53 (RLHSE). Cys54, Cys65, and Cys67 together coordinate Zn(2+). Residues Gln70, 92 to 94 (EGR), and Thr114 each bind GTP. Asp126 functions as the Proton acceptor in the catalytic mechanism. The active-site Nucleophile is Arg128. 2 residues coordinate GTP: Thr149 and Lys154.

Belongs to the GTP cyclohydrolase II family. Zn(2+) is required as a cofactor.

The catalysed reaction is GTP + 4 H2O = 2,5-diamino-6-hydroxy-4-(5-phosphoribosylamino)-pyrimidine + formate + 2 phosphate + 3 H(+). It functions in the pathway cofactor biosynthesis; riboflavin biosynthesis; 5-amino-6-(D-ribitylamino)uracil from GTP: step 1/4. In terms of biological role, catalyzes the conversion of GTP to 2,5-diamino-6-ribosylamino-4(3H)-pyrimidinone 5'-phosphate (DARP), formate and pyrophosphate. The protein is GTP cyclohydrolase-2 of Pseudomonas aeruginosa (strain UCBPP-PA14).